Consider the following 42-residue polypeptide: Photosystem I reaction center subunit IX (42 aa).

The helical transmembrane segment at 7-27 threads the bilayer; sequence YLSVAPVLSTLWFVALAGLLI.

The protein belongs to the PsaJ family.

It localises to the plastid. The protein localises to the chloroplast thylakoid membrane. Its function is as follows. May help in the organization of the PsaE and PsaF subunits. This is Photosystem I reaction center subunit IX from Atropa belladonna (Belladonna).